We begin with the raw amino-acid sequence, 205 residues long: Holliday junction branch migration complex subunit RuvA (205 aa).

A domain I region spans residues 1-64; the sequence is MIGRLRGVLV…EDAQLLYGFI (64 aa). The interval 65-143 is domain II; the sequence is TKQERALFRL…SLMEASAGSE (79 aa). The interval 144–156 is flexible linker; that stretch reads REFVLQSNYSPTP. The interval 157-205 is domain III; it reads TVNSAEEDAISALISLGYKPPQASKSVSAAYKEGMDSETLIKAALKSML.

The protein belongs to the RuvA family. Homotetramer. Forms an RuvA(8)-RuvB(12)-Holliday junction (HJ) complex. HJ DNA is sandwiched between 2 RuvA tetramers; dsDNA enters through RuvA and exits via RuvB. An RuvB hexamer assembles on each DNA strand where it exits the tetramer. Each RuvB hexamer is contacted by two RuvA subunits (via domain III) on 2 adjacent RuvB subunits; this complex drives branch migration. In the full resolvosome a probable DNA-RuvA(4)-RuvB(12)-RuvC(2) complex forms which resolves the HJ.

The protein resides in the cytoplasm. In terms of biological role, the RuvA-RuvB-RuvC complex processes Holliday junction (HJ) DNA during genetic recombination and DNA repair, while the RuvA-RuvB complex plays an important role in the rescue of blocked DNA replication forks via replication fork reversal (RFR). RuvA specifically binds to HJ cruciform DNA, conferring on it an open structure. The RuvB hexamer acts as an ATP-dependent pump, pulling dsDNA into and through the RuvAB complex. HJ branch migration allows RuvC to scan DNA until it finds its consensus sequence, where it cleaves and resolves the cruciform DNA. This chain is Holliday junction branch migration complex subunit RuvA, found in Shewanella sp. (strain W3-18-1).